A 237-amino-acid polypeptide reads, in one-letter code: MDDPFSTLAPRRGTQPLLSNWATIGISELHGGALGWGSWWSNLSRLGSSFGSNLKNLGLKAWNSSTGQALRQHLKDTNLQHKVVEGLSTGIHGAVDIARQEVDRQLAKRLENYEPPRVASTEETVDDVKTVALPSKEDESERVLVTKIREPPPPYDAVFGPAPSAETNKKQKFEETLQNAGLVSSPPAPIAAPAAIAVPAQTTMSHPASSRRRHHWQGTLDSIMGLGLQPIKRRRCF.

The propeptide occupies 1–32 (MDDPFSTLAPRRGTQPLLSNWATIGISELHGG). The amphipathic alpha-helix essential for membrane lytic activity stretch occupies residues 33-57 (ALGWGSWWSNLSRLGSSFGSNLKNL). The involved in endosomal membrane lysis stretch occupies residues 35–56 (GWGSWWSNLSRLGSSFGSNLKN). Residues 51 to 77 (GSNLKNLGLKAWNSSTGQALRQHLKDT) form an interaction with hexon protein region. The short motif at 70–79 (LRQHLKDTNL) is the Nuclear export signal element. At threonine 146 the chain carries Phosphothreonine; by host. A Nuclear export signal motif is present at residues 218–229 (GTLDSIMGLGLQ). The tract at residues 220 to 226 (LDSIMGL) is interaction with hexon protein. The interval 227–237 (GLQPIKRRRCF) is binds to importin alpha/beta, involved in hexon nuclear import. The Nuclear localization signal motif lies at 232 to 235 (KRRR).

It belongs to the adenoviridae protein VI family. In terms of assembly, interacts with hexon protein; this interaction allows nuclear import of hexon trimers and possibly pre-capsid assembly. Interacts (via C-terminal NLS) with importin alpha/beta. As to quaternary structure, interacts (via PPxY motif) with host NEDD4 ubiquitine ligase; this interaction might play a role in virus intracellular transport during entry. Part of a complex composed of the core-capsid bridging protein, the endosome lysis protein VI and the hexon-linking protein VIII; these interactions bridge the virus core to the capsid. Interacts with peripentonal hexons; this interaction stabilizes the capsid by gluing two peripentonal hexons together and joining them with an adjacent group-of-nine hexon. Heterodimer with the viral protease; disulfide-linked. Interacts with the viral protease. In terms of processing, ubiquitinated by Nedd4 following partial capsid disassembly; which might play a role in intracellular virus movement during entry. Post-translationally, contains the major nuclear import and export signals. Proteolytically removed during virion maturation. The processing of the C-terminus turns the precursor into a mature viral structural protein and abrogates its ability to promote hexon import and act as a potential chaperone protein.

It localises to the host nucleus. Its subcellular location is the host cytoplasm. The protein resides in the virion. During virus assembly, promotes hexon trimers nuclear import through nuclear pore complexes via an importin alpha/beta-dependent mechanism. By analogy to herpesviruses capsid assembly, might act as a chaperone to promote the formation of the icosahedral capsid. Its function is as follows. Structural component of the virion that provides increased stability to the particle shell through its interaction with the core-capsid bridging protein and the hexon-linking protein VIII. Fibers shedding during virus entry into host cell allows the endosome lysis protein to be exposed as a membrane-lytic peptide. Exhibits pH-independent membrane fragmentation activity and probably mediates viral rapid escape from host endosome via organellar membrane lysis. It is not clear if it then remains partially associated with the capsid and involved in the intracellular microtubule-dependent transport of capsid to the nucleus, or if it is lost during endosomal penetration. Functionally, cofactor that activates the viral protease. Binds to viral protease in a 1:1 ratio. The protein is Pre-protein VI of Mus musculus (Mouse).